The following is a 528-amino-acid chain: T-complex protein 1 subunit delta (528 aa).

Belongs to the TCP-1 chaperonin family. In terms of assembly, heterooligomeric complex of about 850 to 900 kDa that forms two stacked rings, 12 to 16 nm in diameter.

The protein localises to the cytoplasm. Its function is as follows. Molecular chaperone; assists the folding of proteins upon ATP hydrolysis. Known to play a role, in vitro, in the folding of actin and tubulin. In yeast may play a role in mitotic spindle formation. In Saccharomyces cerevisiae (strain ATCC 204508 / S288c) (Baker's yeast), this protein is T-complex protein 1 subunit delta (CCT4).